The primary structure comprises 217 residues: Phosphoribosylformylglycinamidine synthase subunit PurQ (217 aa).

The region spanning 2-217 is the Glutamine amidotransferase type-1 domain; the sequence is SIGVLVFPGS…GRVLLQGLLS (216 aa). Cys-86 acts as the Nucleophile in catalysis. Residues His-194 and Glu-196 contribute to the active site.

Part of the FGAM synthase complex composed of 1 PurL, 1 PurQ and 2 PurS subunits.

It localises to the cytoplasm. The catalysed reaction is N(2)-formyl-N(1)-(5-phospho-beta-D-ribosyl)glycinamide + L-glutamine + ATP + H2O = 2-formamido-N(1)-(5-O-phospho-beta-D-ribosyl)acetamidine + L-glutamate + ADP + phosphate + H(+). It carries out the reaction L-glutamine + H2O = L-glutamate + NH4(+). It participates in purine metabolism; IMP biosynthesis via de novo pathway; 5-amino-1-(5-phospho-D-ribosyl)imidazole from N(2)-formyl-N(1)-(5-phospho-D-ribosyl)glycinamide: step 1/2. Its function is as follows. Part of the phosphoribosylformylglycinamidine synthase complex involved in the purines biosynthetic pathway. Catalyzes the ATP-dependent conversion of formylglycinamide ribonucleotide (FGAR) and glutamine to yield formylglycinamidine ribonucleotide (FGAM) and glutamate. The FGAM synthase complex is composed of three subunits. PurQ produces an ammonia molecule by converting glutamine to glutamate. PurL transfers the ammonia molecule to FGAR to form FGAM in an ATP-dependent manner. PurS interacts with PurQ and PurL and is thought to assist in the transfer of the ammonia molecule from PurQ to PurL. The polypeptide is Phosphoribosylformylglycinamidine synthase subunit PurQ (Parasynechococcus marenigrum (strain WH8102)).